We begin with the raw amino-acid sequence, 561 residues long: Laccase-1 (561 aa).

Positions 1 to 20 are cleaved as a signal peptide; sequence MKNSFFSSLAKFASLSLAFA. Plastocyanin-like domains follow at residues 68–185 and 191–337; these read VVQN…GPAT and DLGM…YTGS. N-linked (GlcNAc...) asparagine glycosylation is found at asparagine 71, asparagine 87, and asparagine 114. Histidine 119, histidine 121, histidine 163, and histidine 165 together coordinate Cu cation. Cysteine 140 and cysteine 542 are joined by a disulfide. Residues asparagine 226, asparagine 284, asparagine 327, asparagine 391, and asparagine 398 are each glycosylated (N-linked (GlcNAc...) asparagine). Residues 396–525 enclose the Plastocyanin-like 3 domain; sequence LLNWTDPTLL…ALQFVESESS (130 aa). Residues histidine 445, histidine 448, histidine 450, histidine 504, cysteine 505, histidine 506, and histidine 510 each coordinate Cu cation.

The protein belongs to the multicopper oxidase family. Requires Cu cation as cofactor.

It localises to the secreted. The enzyme catalyses 4 hydroquinone + O2 = 4 benzosemiquinone + 2 H2O. In terms of biological role, lignin degradation and detoxification of lignin-derived products. The chain is Laccase-1 (lcc1) from Botryotinia fuckeliana (Noble rot fungus).